The following is a 413-amino-acid chain: DNA primase DnaG (413 aa).

The Toprim domain occupies 168–246; that stretch reads PNLIIVEGRA…KIDYVARAPV (79 aa). The Mg(2+) site is built by E174, D219, and D221.

This sequence belongs to the archaeal DnaG primase family. In terms of assembly, forms a ternary complex with MCM helicase and DNA. Component of the archaeal exosome complex. The cofactor is Mg(2+).

The enzyme catalyses ssDNA + n NTP = ssDNA/pppN(pN)n-1 hybrid + (n-1) diphosphate.. RNA polymerase that catalyzes the synthesis of short RNA molecules used as primers for DNA polymerase during DNA replication. Also part of the exosome, which is a complex involved in RNA degradation. Acts as a poly(A)-binding protein that enhances the interaction between heteromeric, adenine-rich transcripts and the exosome. This chain is DNA primase DnaG, found in Metallosphaera sedula (strain ATCC 51363 / DSM 5348 / JCM 9185 / NBRC 15509 / TH2).